The primary structure comprises 240 residues: MSKLELLPAVDVRDGQAVRLVHGESGTETSYGSPLEAALAWQRSGAEWLHLVDLDAAFGTGDNRALIAEVAQAMDIKVELSGGIRDDDTLAAALATGCTRVNLGTAALETPEWVAKVIAEHGDKIAVGLDVRGTTLRGRGWTRDGGDLYETLDRLNKEGCARYVVTDIAKDGTLQGPNLELLKNVCAATDRPVVASGGVSSLDDLRAIAGLVPAGVEGAIVGKALYAKAFTLEEALEATS.

The active-site Proton acceptor is aspartate 11. Aspartate 130 functions as the Proton donor in the catalytic mechanism.

It belongs to the HisA/HisF family. Monomer.

It is found in the cytoplasm. The catalysed reaction is 1-(5-phospho-beta-D-ribosyl)-5-[(5-phospho-beta-D-ribosylamino)methylideneamino]imidazole-4-carboxamide = 5-[(5-phospho-1-deoxy-D-ribulos-1-ylimino)methylamino]-1-(5-phospho-beta-D-ribosyl)imidazole-4-carboxamide. It carries out the reaction N-(5-phospho-beta-D-ribosyl)anthranilate = 1-(2-carboxyphenylamino)-1-deoxy-D-ribulose 5-phosphate. The protein operates within amino-acid biosynthesis; L-histidine biosynthesis; L-histidine from 5-phospho-alpha-D-ribose 1-diphosphate: step 4/9. It participates in amino-acid biosynthesis; L-tryptophan biosynthesis; L-tryptophan from chorismate: step 3/5. Catalyzes the isomerization of the aminoaldose moiety of ProFAR to the aminoketose of PRFAR in the biosynthesis pathway for histidine and the isomerization of the aminoaldose PRA to the aminoketose CdRP in the biosynthsis pathway for tryptophan. The polypeptide is Phosphoribosyl isomerase A (priA) (Streptomyces coelicolor (strain ATCC BAA-471 / A3(2) / M145)).